Here is a 183-residue protein sequence, read N- to C-terminus: Oligoribonuclease (183 aa).

Residues 8 to 171 (LIWLDLEMTG…QDIRDSIEEL (164 aa)) enclose the Exonuclease domain. Residue Tyr-129 is part of the active site.

This sequence belongs to the oligoribonuclease family.

It is found in the cytoplasm. In terms of biological role, 3'-to-5' exoribonuclease specific for small oligoribonucleotides. This Coxiella burnetii (strain RSA 493 / Nine Mile phase I) protein is Oligoribonuclease.